The primary structure comprises 1773 residues: MAPFKKLKLLLWKNFVLKKRKTLVTVLETLMPVLFSAIVLYLRLNSMPRNKANTNYPAVDVSLLPVYFHNYPLKSKFQLVYIPSKSETLKAVTEVVEQTFAVDFEVLGFPSVSLFENYIIKDPKSFYVLVGIVFHHDFNSSNEPLPLVVKYDLRFSYVQRNSISPPRHLFFQEDIEGWCTAFLYPPNLSQAPREFSYADGGHPGYNKEGFLAIQHAVDKAIMLHHAPKAALDMFKNLQVSVQRFPSGSHIQDPFLVILQNEFPLLLMLSFICVELIITNSILLEKERKQKEYMYLMGLENWLHWVAWFITFFLSALVTVSGMTVLFCTKMNGVAVFRNSNTTLIFIFLMCFAIATIFFAFMMSTFFQRAHVGTVIGGIVFFFTYLPYMYITFSYHQRTYSQKILSCLFSNVAMAMGVRFISLFEAEGTGIQWRNMGSVWGDFSFTQVLVMLLLDSFLYCLVAFLVESLFPRKIGMPKSWYIFAKCPLWRKKSFPVIPPLLVIGDPEKTSKGDFLQDEPAGHINAIEIQHLYKVFYTGRSKCIAVKDLSMNLYKGQITVLLGHNGAGKTTVCSVLTGLIPPSKGHAYIHGCEISKDMVRIRKNVGWCPQHDILFDNFTVTDHLYFYGQLKGLSHQDCHEKIEEMLHTLGLEDKRNSRSKFLSGGIKRKLAIGIALIAGSKVLILDEPTSGMDSSSRRAIWDLLQQQKGDRTVLLTTHFMDEADLLGDRIAILAKGELQCCGTPSFLKQKYGAGYYMTIIKTPLCDTEKLAKVIYHHIPNAILESRIGEEMIFTLPKKAMPRFEALFADLEQRQTELGISTFGASVTTMEEVFIRVCKLADPSTNVLTEKRPSLRHLPRNHRVPVDRIKCLHSRIFSLSSDQPIRLNTGFSLLCQQFYAMLLKKVAFSRRNWMLVLSVQILLPLVIIMLSLSFFNFKLRKLDNVPLELTLQTYGQTIVPFFIAENSRLDPQLSDNFVKMLVAAGQVPLRIQGSVENFLLKKAKEAPEDFDKLYVVAASFEDVNDHTTVKALFNNQAYHSPSLALALVDNVLFKLLSGANASITTTNYPQPQTAMELSETILYQGPKGHYLVVNFLFGIAFLSSSFSILTVGEKSIKSKNLQFLSGVSMAAFWLSALLWDLISFLVPTLLLVLVFFWYKEEAFAHPQSIPAVVLIMMLYGWAIIPLVYTVSFSFKTPGSGCVKLVAMLTFLSISPVVLVTVTSEKDLGYTELSDTLDHIFLIFPGHCLGMAFSNLYYNFEIKKFCNAKNLSDIDCNDVLEGYVVQKNIYAWESLGIGKYLTALAILGPVYITLLFLTEANAFCALKARLSGFFCKQKLRMLLNVTGAEDEDVLEEAENIKYHLDTLIKKSPLVVKELSKVYKEKVPLLAVNKVSFVVKEKECFGLLGLNGAGKTSIFNMLTREQPITSGDAFVKGFNIRTDMAKVQQWIGYCPEFDALLNFMTGREMLVMHARIRGIPECHIKTCVDMILENLLMCVYADKLVKTYSDGNKRVLSTAIALLGEPTVILLDEPSTGMDPVARRLVWDAVGRVRESGKTIVITSHSMEECEALCTRLAIMVQGQFKCLGSPQHLKSRFGSGYSLQAKVRRKWQQQMLEEFKAFVDLTFPGSSLEDEHQSMVQYYLPGQNLSWAKVFGIMEQAKKDYVLEDYSISQLSLEDIFLSFTRPVPDTKENIQQGQAALDSSLSPSNSRPISSPPSSPPSSPPSSPPSRPPSRPSQPPSRPPSRHPSSPSQPPSRPPSRHPSSPSQPPSEPVLL.

3 consecutive transmembrane segments (helical) span residues 22 to 42, 262 to 282, and 306 to 326; these read TLVT…VLYL, FPLL…NSIL, and AWFI…TVLF. N-linked (GlcNAc...) asparagine glycosylation is present at N340. Transmembrane regions (helical) follow at residues 342–362, 372–392, 403–423, and 444–464; these read TLIF…AFMM, GTVI…YITF, ILSC…ISLF, and FTQV…VAFL. Residues 525 to 758 form the ABC transporter 1 domain; that stretch reads IEIQHLYKVF…YGAGYYMTII (234 aa). 561–568 is an ATP binding site; it reads GHNGAGKT. An N-linked (GlcNAc...) asparagine glycan is attached at N615. Helical transmembrane passes span 912-932, 1088-1108, 1134-1154, 1166-1186, 1198-1218, 1236-1256, and 1293-1313; these read LVLS…LSFF, LVVN…ILTV, LLWD…VFFW, IPAV…LVYT, CVKL…LVTV, IFLI…YYNF, and IGKY…LLFL. N1340 is a glycosylation site (N-linked (GlcNAc...) asparagine). Positions 1369–1602 constitute an ABC transporter 2 domain; it reads LVVKELSKVY…FGSGYSLQAK (234 aa). ATP is bound at residue 1404–1411; sequence GLNGAGKT. Positions 1690–1773 are disordered; it reads NIQQGQAALD…SQPPSEPVLL (84 aa). A compositionally biased stretch (low complexity) spans 1700-1710; that stretch reads SSLSPSNSRPI. Pro residues-rich tracts occupy residues 1711–1740 and 1763–1773; these read SSPP…PSRP and PSQPPSEPVLL.

Belongs to the ABC transporter superfamily. ABCA family. N-glycosylated.

It is found in the endoplasmic reticulum membrane. Its subcellular location is the cytoplasm. It catalyses the reaction cholesterol(in) + ATP + H2O = cholesterol(out) + ADP + phosphate + H(+). In terms of biological role, promotes cholesterol efflux from sperm which renders sperm capable of fertilization. Has also been shown to decrease levels of intracellular esterified neutral lipids including cholesteryl esters, fatty acid esters and triacylglycerols. This is ATP-binding cassette sub-family A member 17 from Rattus norvegicus (Rat).